The chain runs to 147 residues: UPF0178 protein VS_2364 (147 aa).

The protein belongs to the UPF0178 family.

The chain is UPF0178 protein VS_2364 from Vibrio atlanticus (strain LGP32) (Vibrio splendidus (strain Mel32)).